The primary structure comprises 251 residues: Ell1-associated factor 1 (251 aa).

Disordered regions lie at residues 110 to 187 (SKTV…DMEV) and 201 to 251 (FDQE…EDED). Residues 112 to 123 (TVPSNAITQSDN) are compositionally biased toward polar residues. Residues 124–135 (SQISESKSTSQS) show a composition bias toward low complexity. Basic and acidic residues predominate over residues 143–157 (RRKEKELEASKDGKI). 2 stretches are compositionally biased toward polar residues: residues 204-220 (EFNS…TASK) and 236-251 (SSAQ…EDED). Ser247 is subject to Phosphoserine.

This sequence belongs to the EAF family. As to quaternary structure, forms a stable heterodimer with ell1. Ell1-eaf1 complex interacts with RNA polymerase II.

The protein resides in the nucleus. Functionally, activates transcription elongation by RNA polymerase II and pyrophosphorolysis as a complex with ell1. Acts as a transcriptional transactivator of ell1 elongation activities. This chain is Ell1-associated factor 1 (eaf1), found in Schizosaccharomyces pombe (strain 972 / ATCC 24843) (Fission yeast).